The following is a 798-amino-acid chain: Translation initiation factor IF-2 (798 aa).

Positions 40–207 are disordered; sequence SEQETKLRQA…QQESAKPAVP (168 aa). Low complexity predominate over residues 57–186; sequence NTQSKATNNQ…RNNFNNQNRN (130 aa). The segment covering 187-196 has biased composition (basic residues); the sequence is RFNKKGKKGK. The region spanning 300 to 469 is the tr-type G domain; that stretch reads TRPPVVTIMG…LLIAEVEDLK (170 aa). Residues 309–316 form a G1 region; sequence GHVDHGKT. GTP is bound at residue 309–316; sequence GHVDHGKT. A G2 region spans residues 334 to 338; that stretch reads GITQH. The tract at residues 355 to 358 is G3; sequence DTPG. Residues 355–359 and 409–412 contribute to the GTP site; these read DTPGH and NKID. The interval 409-412 is G4; it reads NKID. A G5 region spans residues 445–447; that stretch reads SAK.

The protein belongs to the TRAFAC class translation factor GTPase superfamily. Classic translation factor GTPase family. IF-2 subfamily.

Its subcellular location is the cytoplasm. In terms of biological role, one of the essential components for the initiation of protein synthesis. Protects formylmethionyl-tRNA from spontaneous hydrolysis and promotes its binding to the 30S ribosomal subunits. Also involved in the hydrolysis of GTP during the formation of the 70S ribosomal complex. The polypeptide is Translation initiation factor IF-2 (Enterococcus faecalis (strain ATCC 700802 / V583)).